A 448-amino-acid polypeptide reads, in one-letter code: Guanine deaminase (448 aa).

Zn(2+)-binding residues include His74 and His76. Residues His76–Gln79, Arg204–Phe205, His231–Glu234, and Asp319 each bind substrate. Residues His231 and Asp319 each coordinate Zn(2+).

Belongs to the metallo-dependent hydrolases superfamily. ATZ/TRZ family. The cofactor is Zn(2+).

The enzyme catalyses guanine + H2O + H(+) = xanthine + NH4(+). It functions in the pathway purine metabolism; guanine degradation; xanthine from guanine: step 1/1. Its activity is regulated as follows. Strongly inhibited by p-chloromercuribenzoate (PCMB). Potassium cyanide (KCN) strongly inhibits activity towards 7,8-dihydropterin but has almost no effect on activity towards guanine. Pterin inhibits activity towards guanine but has little effect on activity towards 7,8-dihydropterin. Its function is as follows. Catalyzes the hydrolytic deamination of guanine, producing xanthine and ammonia. Also has 7,8-dihydropterin deaminase activity, which plays a role in synthesis of the red eye pigment aurodrosopterin. The polypeptide is Guanine deaminase (Drosophila melanogaster (Fruit fly)).